Reading from the N-terminus, the 208-residue chain is NAD(P)H-quinone oxidoreductase subunit I (208 aa).

2 consecutive 4Fe-4S ferredoxin-type domains span residues 55–84 (GRIH…VDWV) and 95–124 (RNYS…MTEE). [4Fe-4S] cluster-binding residues include C64, C67, C70, C74, C104, C107, C110, and C114.

It belongs to the complex I 23 kDa subunit family. In terms of assembly, NDH-1 is composed of at least 11 different subunits. The cofactor is [4Fe-4S] cluster.

It is found in the cellular thylakoid membrane. The enzyme catalyses a plastoquinone + NADH + (n+1) H(+)(in) = a plastoquinol + NAD(+) + n H(+)(out). It catalyses the reaction a plastoquinone + NADPH + (n+1) H(+)(in) = a plastoquinol + NADP(+) + n H(+)(out). In terms of biological role, NDH-1 shuttles electrons from an unknown electron donor, via FMN and iron-sulfur (Fe-S) centers, to quinones in the respiratory and/or the photosynthetic chain. The immediate electron acceptor for the enzyme in this species is believed to be plastoquinone. Couples the redox reaction to proton translocation, and thus conserves the redox energy in a proton gradient. The protein is NAD(P)H-quinone oxidoreductase subunit I of Prochlorococcus marinus (strain AS9601).